The sequence spans 268 residues: Shikimate kinase (268 aa).

ATP is bound at residue 70–80; it reads PSGYGLKSSSA.

This sequence belongs to the GHMP kinase family. Archaeal shikimate kinase subfamily.

It localises to the cytoplasm. It catalyses the reaction shikimate + ATP = 3-phosphoshikimate + ADP + H(+). Its pathway is metabolic intermediate biosynthesis; chorismate biosynthesis; chorismate from D-erythrose 4-phosphate and phosphoenolpyruvate: step 5/7. This chain is Shikimate kinase (aroK), found in Thermoplasma acidophilum (strain ATCC 25905 / DSM 1728 / JCM 9062 / NBRC 15155 / AMRC-C165).